Consider the following 215-residue polypeptide: MIRASKVHGQYHWKEPAADTVVLDFDDRHRRRMAMTGTRGLSFLLDLEHATALRGGDALVLDDGRLIEVVAAPEPLLEIRGRDPQHLVRLAWHLGNRHLPTQIMAKALRIRRDHVIADMVRGLGGKAVEIEAPFDPEGGAYAPAHEGAAHHDHGGHEHRHHDHGHHDHADHEHDHKHDHGKHDHAGHDHAHDHHVHDEHCGHDHGHGHSHKHDHK.

Residues 134–215 (FDPEGGAYAP…HGHSHKHDHK (82 aa)) form a disordered region. Over residues 164–206 (GHHDHADHEHDHKHDHGKHDHAGHDHAHDHHVHDEHCGHDHGH) the composition is skewed to basic and acidic residues.

It belongs to the UreE family.

It is found in the cytoplasm. Its function is as follows. Involved in urease metallocenter assembly. Binds nickel. Probably functions as a nickel donor during metallocenter assembly. This Rhodopseudomonas palustris (strain HaA2) protein is Urease accessory protein UreE.